Here is an 816-residue protein sequence, read N- to C-terminus: Sucrose synthase 2 (816 aa).

Position 15 is a phosphoserine (Ser-15). The interval 280 to 757 is GT-B glycosyltransferase; the sequence is MVFNVVILSP…GLQRIEEKYT (478 aa).

It belongs to the glycosyltransferase 1 family. Plant sucrose synthase subfamily.

It catalyses the reaction an NDP-alpha-D-glucose + D-fructose = a ribonucleoside 5'-diphosphate + sucrose + H(+). Functionally, sucrose-cleaving enzyme that provides UDP-glucose and fructose for various metabolic pathways. The polypeptide is Sucrose synthase 2 (SUS1) (Zea mays (Maize)).